Here is a 393-residue protein sequence, read N- to C-terminus: Elongation factor Tu (393 aa).

Residues 10–203 (KPHVNIGTIG…AVDEFIPEPL (194 aa)) form the tr-type G domain. The tract at residues 19–26 (GHVDHGKT) is G1. 19-26 (GHVDHGKT) contacts GTP. T26 is a Mg(2+) binding site. The interval 60–64 (GITIS) is G2. Positions 81-84 (DCPG) are G3. GTP-binding positions include 81–85 (DCPGH) and 136–139 (NKVD). The tract at residues 136–139 (NKVD) is G4. Positions 173–175 (SAL) are G5.

This sequence belongs to the TRAFAC class translation factor GTPase superfamily. Classic translation factor GTPase family. EF-Tu/EF-1A subfamily. Monomer.

The protein localises to the cytoplasm. The enzyme catalyses GTP + H2O = GDP + phosphate + H(+). Its function is as follows. GTP hydrolase that promotes the GTP-dependent binding of aminoacyl-tRNA to the A-site of ribosomes during protein biosynthesis. This chain is Elongation factor Tu, found in Chlorobium phaeobacteroides (strain DSM 266 / SMG 266 / 2430).